The primary structure comprises 658 residues: Carnitine O-palmitoyltransferase 2, mitochondrial (658 aa).

The N-terminal 25 residues, methionine 1–leucine 25, are a transit peptide targeting the mitochondrion. The Mitochondrial matrix portion of the chain corresponds to serine 26–leucine 178. Lysine 69 is subject to N6-succinyllysine. Position 79 is an N6-acetyllysine (lysine 79). Position 85 is an N6-succinyllysine (lysine 85). The note=Mitochondrial inner membrane intramembrane region spans asparagine 179–asparagine 208. Residues alanine 209–serine 658 lie on the Mitochondrial matrix side of the membrane. Lysine 239 is modified (N6-acetyllysine; alternate). Residue lysine 239 is modified to N6-succinyllysine; alternate. Residue lysine 305 is modified to N6-acetyllysine. The active-site Proton acceptor is the histidine 372. N6-succinyllysine is present on residues lysine 424 and lysine 439. CoA is bound at residue glycine 452 to aspartate 464. (R)-carnitine-binding residues include tyrosine 486, serine 488, and threonine 499. Lysine 510 and lysine 544 each carry N6-acetyllysine; alternate. Lysine 510 and lysine 544 each carry N6-succinyllysine; alternate.

It belongs to the carnitine/choline acetyltransferase family.

The protein localises to the mitochondrion inner membrane. The catalysed reaction is (R)-carnitine + hexadecanoyl-CoA = O-hexadecanoyl-(R)-carnitine + CoA. It carries out the reaction octanoyl-CoA + (R)-carnitine = O-octanoyl-(R)-carnitine + CoA. The enzyme catalyses decanoyl-CoA + (R)-carnitine = O-decanoyl-(R)-carnitine + CoA. It catalyses the reaction dodecanoyl-CoA + (R)-carnitine = O-dodecanoyl-R-carnitine + CoA. The catalysed reaction is tetradecanoyl-CoA + (R)-carnitine = O-tetradecanoyl-(R)-carnitine + CoA. It carries out the reaction (R)-carnitine + octadecanoyl-CoA = O-octadecanoyl-(R)-carnitine + CoA. The enzyme catalyses eicosanoyl-CoA + (R)-carnitine = O-eicosanoyl-(R)-carnitine + CoA. It catalyses the reaction (9Z)-tetradecenoyl-CoA + (R)-carnitine = O-(9Z)-tetradecenoyl-(R)-carnitine + CoA. The catalysed reaction is (5Z)-tetradecenoyl-CoA + (R)-carnitine = O-(5Z)-tetradecenoyl-(R)-carnitine + CoA. It carries out the reaction (R)-carnitine + (9Z)-octadecenoyl-CoA = O-(9Z)-octadecenoyl-(R)-carnitine + CoA. The enzyme catalyses 4,8-dimethylnonanoyl-CoA + (R)-carnitine = O-4,8-dimethylnonanoyl-(R)-carnitine + CoA. It participates in lipid metabolism; fatty acid beta-oxidation. Its activity is regulated as follows. Inhibited by trans-2-hexadecanoyl-CoA. Involved in the intramitochondrial synthesis of acylcarnitines from accumulated acyl-CoA metabolites. Reconverts acylcarnitines back into the respective acyl-CoA esters that can then undergo beta-oxidation, an essential step for the mitochondrial uptake of long-chain fatty acids and their subsequent beta-oxidation in the mitochondrion. Active with medium (C8-C12) and long-chain (C14-C18) acyl-CoA esters. This Homo sapiens (Human) protein is Carnitine O-palmitoyltransferase 2, mitochondrial.